A 211-amino-acid polypeptide reads, in one-letter code: Large ribosomal subunit protein uL4 (211 aa).

Positions 63–94 (RFGRQKGGGTARHGARSAPQFVGGGKAHGPRV) are disordered.

It belongs to the universal ribosomal protein uL4 family. In terms of assembly, part of the 50S ribosomal subunit.

Functionally, one of the primary rRNA binding proteins, this protein initially binds near the 5'-end of the 23S rRNA. It is important during the early stages of 50S assembly. It makes multiple contacts with different domains of the 23S rRNA in the assembled 50S subunit and ribosome. Forms part of the polypeptide exit tunnel. This chain is Large ribosomal subunit protein uL4, found in Maricaulis maris (strain MCS10) (Caulobacter maris).